A 335-amino-acid chain; its full sequence is Adenosine deaminase (335 aa).

Residues histidine 12 and histidine 14 each coordinate Zn(2+). Histidine 14 and aspartate 16 together coordinate substrate. Histidine 197 serves as a coordination point for Zn(2+). Glutamate 200 acts as the Proton donor in catalysis. Position 278 (aspartate 278) interacts with Zn(2+).

This sequence belongs to the metallo-dependent hydrolases superfamily. Adenosine and AMP deaminases family. Adenosine deaminase subfamily. The cofactor is Zn(2+).

The enzyme catalyses adenosine + H2O + H(+) = inosine + NH4(+). It carries out the reaction 2'-deoxyadenosine + H2O + H(+) = 2'-deoxyinosine + NH4(+). Its function is as follows. Catalyzes the hydrolytic deamination of adenosine and 2-deoxyadenosine. In Clostridium botulinum (strain Okra / Type B1), this protein is Adenosine deaminase.